A 143-amino-acid polypeptide reads, in one-letter code: Nucleoside diphosphate kinase (143 aa).

ATP is bound by residues Lys-10, Phe-58, Arg-86, Thr-92, Arg-103, and Asn-113. The Pros-phosphohistidine intermediate role is filled by His-116.

Belongs to the NDK family. As to quaternary structure, homotetramer. The cofactor is Mg(2+).

Its subcellular location is the cytoplasm. It carries out the reaction a 2'-deoxyribonucleoside 5'-diphosphate + ATP = a 2'-deoxyribonucleoside 5'-triphosphate + ADP. It catalyses the reaction a ribonucleoside 5'-diphosphate + ATP = a ribonucleoside 5'-triphosphate + ADP. Its function is as follows. Major role in the synthesis of nucleoside triphosphates other than ATP. The ATP gamma phosphate is transferred to the NDP beta phosphate via a ping-pong mechanism, using a phosphorylated active-site intermediate. The polypeptide is Nucleoside diphosphate kinase (Ehrlichia ruminantium (strain Welgevonden)).